Reading from the N-terminus, the 236-residue chain is 2-C-methyl-D-erythritol 4-phosphate cytidylyltransferase (236 aa).

Belongs to the IspD/TarI cytidylyltransferase family. IspD subfamily.

The catalysed reaction is 2-C-methyl-D-erythritol 4-phosphate + CTP + H(+) = 4-CDP-2-C-methyl-D-erythritol + diphosphate. It functions in the pathway isoprenoid biosynthesis; isopentenyl diphosphate biosynthesis via DXP pathway; isopentenyl diphosphate from 1-deoxy-D-xylulose 5-phosphate: step 2/6. Functionally, catalyzes the formation of 4-diphosphocytidyl-2-C-methyl-D-erythritol from CTP and 2-C-methyl-D-erythritol 4-phosphate (MEP). In Burkholderia vietnamiensis (strain G4 / LMG 22486) (Burkholderia cepacia (strain R1808)), this protein is 2-C-methyl-D-erythritol 4-phosphate cytidylyltransferase.